The chain runs to 187 residues: UPF0301 protein ETA_28320 (187 aa).

The protein belongs to the UPF0301 (AlgH) family.

The polypeptide is UPF0301 protein ETA_28320 (Erwinia tasmaniensis (strain DSM 17950 / CFBP 7177 / CIP 109463 / NCPPB 4357 / Et1/99)).